The primary structure comprises 302 residues: Bifunctional protein FolD 2 (302 aa).

NADP(+)-binding positions include 170–172, serine 195, and isoleucine 236; that span reads GRS.

The protein belongs to the tetrahydrofolate dehydrogenase/cyclohydrolase family. In terms of assembly, homodimer.

The catalysed reaction is (6R)-5,10-methylene-5,6,7,8-tetrahydrofolate + NADP(+) = (6R)-5,10-methenyltetrahydrofolate + NADPH. It catalyses the reaction (6R)-5,10-methenyltetrahydrofolate + H2O = (6R)-10-formyltetrahydrofolate + H(+). Its pathway is one-carbon metabolism; tetrahydrofolate interconversion. Catalyzes the oxidation of 5,10-methylenetetrahydrofolate to 5,10-methenyltetrahydrofolate and then the hydrolysis of 5,10-methenyltetrahydrofolate to 10-formyltetrahydrofolate. This is Bifunctional protein FolD 2 from Paracoccus denitrificans (strain Pd 1222).